The following is a 220-amino-acid chain: Glutathione S-transferase-like protein FUS3 (220 aa).

The 82-residue stretch at 3-84 (SFGTLYTYMP…YVAQSGPQAS (82 aa)) folds into the GST N-terminal domain. The 131-residue stretch at 90–220 (DAMSSAKIRQ…LIEKRRIGAK (131 aa)) folds into the GST C-terminal domain.

This sequence belongs to the GST superfamily.

In terms of biological role, glutathione S-transferase-like protein; part of the gene cluster that mediates the biosynthesis of the mycotoxin fusarin C. Within the cluster, FUS1, FUS2, FUS8 and FUS9 are sufficient for fusarin production. The other FUS cluster members are not essential for fusarin C biosynthesis. The polypeptide is Glutathione S-transferase-like protein FUS3 (Gibberella moniliformis (strain M3125 / FGSC 7600) (Maize ear and stalk rot fungus)).